The following is a 160-amino-acid chain: Eukaryotic translation initiation factor 5A-2 (160 aa).

Basic and acidic residues predominate over residues 1–12 (MSDEEHHFESKA). Residues 1–21 (MSDEEHHFESKADAGASKTFP) are disordered. Position 52 is a hypusine (lysine 52).

It belongs to the eIF-5A family. Lys-52 undergoes hypusination, a unique post-translational modification that consists in the addition of a butylamino group from spermidine to lysine side chain, leading to the formation of the unusual amino acid hypusine. eIF-5As are the only known proteins to undergo this modification, which is essential for their function.

Translation factor that promotes translation elongation and termination, particularly upon ribosome stalling at specific amino acid sequence contexts. Binds between the exit (E) and peptidyl (P) site of the ribosome and promotes rescue of stalled ribosome: specifically required for efficient translation of polyproline-containing peptides as well as other motifs that stall the ribosome. Acts as a ribosome quality control (RQC) cofactor by joining the RQC complex to facilitate peptidyl transfer during CAT tailing step. This Solanum lycopersicum (Tomato) protein is Eukaryotic translation initiation factor 5A-2.